The chain runs to 164 residues: Ecotin (164 aa).

The signal sequence occupies residues 1 to 20; that stretch reads MKMFVPAVVFAALASASAWA. Residues Cys72 and Cys109 are joined by a disulfide bond.

Belongs to the protease inhibitor I11 (ecotin) family. In terms of assembly, homodimer.

It localises to the periplasm. Its function is as follows. General inhibitor of pancreatic serine proteases: inhibits chymotrypsin, trypsin, elastases, factor X, kallikrein as well as a variety of other proteases. This is Ecotin from Salmonella typhi.